We begin with the raw amino-acid sequence, 339 residues long: Putative zinc metalloprotease FN1322 (339 aa).

Zn(2+) is bound at residue H17. E18 is a catalytic residue. H21 is a binding site for Zn(2+). Transmembrane regions (helical) follow at residues 88–110, 262–284, and 318–335; these read FIVL…FVTA, FGWI…LNLL, and GMIL…NDVW. Residues 96–179 form the PDZ domain; sequence FMNFLMAFIL…ITALVERNGK (84 aa).

Belongs to the peptidase M50B family. Zn(2+) is required as a cofactor.

It is found in the cell membrane. This chain is Putative zinc metalloprotease FN1322, found in Fusobacterium nucleatum subsp. nucleatum (strain ATCC 25586 / DSM 15643 / BCRC 10681 / CIP 101130 / JCM 8532 / KCTC 2640 / LMG 13131 / VPI 4355).